The chain runs to 428 residues: Elongation factor 1-alpha (428 aa).

The tr-type G domain occupies 5–215 (KPHVNIVFIG…ALDQIPEPPK (211 aa)). Positions 14 to 21 (GHVDHGKS) are G1. A GTP-binding site is contributed by 14 to 21 (GHVDHGKS). Residue S21 coordinates Mg(2+). The segment at 68-72 (GITID) is G2. The tract at residues 89-92 (DAPG) is G3. GTP-binding positions include 89–93 (DAPGH) and 144–147 (NKMD). Residues 144 to 147 (NKMD) are G4. Positions 181-183 (SAW) are G5.

It belongs to the TRAFAC class translation factor GTPase superfamily. Classic translation factor GTPase family. EF-Tu/EF-1A subfamily.

It localises to the cytoplasm. The enzyme catalyses GTP + H2O = GDP + phosphate + H(+). Its function is as follows. GTP hydrolase that promotes the GTP-dependent binding of aminoacyl-tRNA to the A-site of ribosomes during protein biosynthesis. The protein is Elongation factor 1-alpha of Thermococcus onnurineus (strain NA1).